The chain runs to 419 residues: Cysteine desulfurase (419 aa).

Pyridoxal 5'-phosphate is bound by residues 69–70 (AT), Asn157, Gln185, and 205–207 (SAH). Lys208 carries the post-translational modification N6-(pyridoxal phosphate)lysine. Thr245 contacts pyridoxal 5'-phosphate. Residue Cys333 is the Cysteine persulfide intermediate of the active site. Residue Cys333 participates in [2Fe-2S] cluster binding. The interval 392-419 (TPIQDEVRDDNRASSNSLNRGSAASKES) is disordered. Polar residues predominate over residues 404–413 (ASSNSLNRGS).

It belongs to the class-V pyridoxal-phosphate-dependent aminotransferase family. NifS/IscS subfamily. As to quaternary structure, homodimer. The cofactor is pyridoxal 5'-phosphate.

The enzyme catalyses (sulfur carrier)-H + L-cysteine = (sulfur carrier)-SH + L-alanine. Catalyzes the removal of elemental sulfur atoms from cysteine to produce alanine. Seems to participate in the biosynthesis of the nitrogenase metalloclusters by providing the inorganic sulfur required for the Fe-S core formation. The protein is Cysteine desulfurase of Frankia sp. (strain EuIK1).